A 436-amino-acid chain; its full sequence is 3-ketoacyl-CoA thiolase (436 aa).

Cys-99 serves as the catalytic Acyl-thioester intermediate. Residues His-392 and Cys-422 each act as proton acceptor in the active site.

This sequence belongs to the thiolase-like superfamily. Thiolase family. In terms of assembly, heterotetramer of two alpha chains (FadJ) and two beta chains (FadI).

It is found in the cytoplasm. The enzyme catalyses an acyl-CoA + acetyl-CoA = a 3-oxoacyl-CoA + CoA. It participates in lipid metabolism; fatty acid beta-oxidation. In terms of biological role, catalyzes the final step of fatty acid oxidation in which acetyl-CoA is released and the CoA ester of a fatty acid two carbons shorter is formed. In Pseudoalteromonas atlantica (strain T6c / ATCC BAA-1087), this protein is 3-ketoacyl-CoA thiolase.